The following is a 148-amino-acid chain: Urease accessory protein UreE (148 aa).

This sequence belongs to the UreE family.

It is found in the cytoplasm. In terms of biological role, involved in urease metallocenter assembly. Binds nickel. Probably functions as a nickel donor during metallocenter assembly. This chain is Urease accessory protein UreE, found in Aliarcobacter butzleri (strain RM4018) (Arcobacter butzleri).